The following is a 177-amino-acid chain: Acireductone dioxygenase (177 aa).

The segment at 1–23 (MVRAWYMDDSDADQRAPHMTDPP) is disordered. Positions 86, 88, 92, and 131 each coordinate Fe(2+). Ni(2+) contacts are provided by His86, His88, Glu92, and His131.

It belongs to the acireductone dioxygenase (ARD) family. Requires Fe(2+) as cofactor. Ni(2+) serves as cofactor.

Its subcellular location is the cytoplasm. It is found in the nucleus. The enzyme catalyses 1,2-dihydroxy-5-(methylsulfanyl)pent-1-en-3-one + O2 = 4-methylsulfanyl-2-oxobutanoate + formate + 2 H(+). The catalysed reaction is 1,2-dihydroxy-5-(methylsulfanyl)pent-1-en-3-one + O2 = 3-(methylsulfanyl)propanoate + CO + formate + 2 H(+). It participates in amino-acid biosynthesis; L-methionine biosynthesis via salvage pathway; L-methionine from S-methyl-5-thio-alpha-D-ribose 1-phosphate: step 5/6. Catalyzes 2 different reactions between oxygen and the acireductone 1,2-dihydroxy-3-keto-5-methylthiopentene (DHK-MTPene) depending upon the metal bound in the active site. Fe-containing acireductone dioxygenase (Fe-ARD) produces formate and 2-keto-4-methylthiobutyrate (KMTB), the alpha-ketoacid precursor of methionine in the methionine recycle pathway. Ni-containing acireductone dioxygenase (Ni-ARD) produces methylthiopropionate, carbon monoxide and formate, and does not lie on the methionine recycle pathway. The polypeptide is Acireductone dioxygenase (Branchiostoma floridae (Florida lancelet)).